Here is a 610-residue protein sequence, read N- to C-terminus: Elongation factor 4 (610 aa).

The tr-type G domain occupies 13–195; that stretch reads SHIRNFSIVA…AIVHKLPAPK (183 aa). GTP contacts are provided by residues 25–30 and 142–145; these read DHGKST and NKID.

This sequence belongs to the TRAFAC class translation factor GTPase superfamily. Classic translation factor GTPase family. LepA subfamily.

Its subcellular location is the cell inner membrane. The catalysed reaction is GTP + H2O = GDP + phosphate + H(+). Required for accurate and efficient protein synthesis under certain stress conditions. May act as a fidelity factor of the translation reaction, by catalyzing a one-codon backward translocation of tRNAs on improperly translocated ribosomes. Back-translocation proceeds from a post-translocation (POST) complex to a pre-translocation (PRE) complex, thus giving elongation factor G a second chance to translocate the tRNAs correctly. Binds to ribosomes in a GTP-dependent manner. This chain is Elongation factor 4, found in Rhizobium johnstonii (strain DSM 114642 / LMG 32736 / 3841) (Rhizobium leguminosarum bv. viciae).